The primary structure comprises 338 residues: Ketol-acid reductoisomerase (NADP(+)) (338 aa).

The 181-residue stretch at 1 to 181 (MNVYYDKDCD…GGGRSGIIET (181 aa)) folds into the KARI N-terminal Rossmann domain. Residues 24 to 27 (YGSQ), Arg-47, Ser-50, Ser-52, and 82 to 85 (DEFQ) contribute to the NADP(+) site. His-107 is an active-site residue. Gly-133 is an NADP(+) binding site. Residues 182–327 (TFKDETETDL…AKLRGMMPWI (146 aa)) enclose the KARI C-terminal knotted domain. Positions 190, 194, 226, and 230 each coordinate Mg(2+). Ser-251 contacts substrate.

Belongs to the ketol-acid reductoisomerase family. The cofactor is Mg(2+).

The catalysed reaction is (2R)-2,3-dihydroxy-3-methylbutanoate + NADP(+) = (2S)-2-acetolactate + NADPH + H(+). It catalyses the reaction (2R,3R)-2,3-dihydroxy-3-methylpentanoate + NADP(+) = (S)-2-ethyl-2-hydroxy-3-oxobutanoate + NADPH + H(+). It functions in the pathway amino-acid biosynthesis; L-isoleucine biosynthesis; L-isoleucine from 2-oxobutanoate: step 2/4. Its pathway is amino-acid biosynthesis; L-valine biosynthesis; L-valine from pyruvate: step 2/4. Its function is as follows. Involved in the biosynthesis of branched-chain amino acids (BCAA). Catalyzes an alkyl-migration followed by a ketol-acid reduction of (S)-2-acetolactate (S2AL) to yield (R)-2,3-dihydroxy-isovalerate. In the isomerase reaction, S2AL is rearranged via a Mg-dependent methyl migration to produce 3-hydroxy-3-methyl-2-ketobutyrate (HMKB). In the reductase reaction, this 2-ketoacid undergoes a metal-dependent reduction by NADPH to yield (R)-2,3-dihydroxy-isovalerate. The sequence is that of Ketol-acid reductoisomerase (NADP(+)) from Psychrobacter arcticus (strain DSM 17307 / VKM B-2377 / 273-4).